The primary structure comprises 358 residues: Small ribosomal subunit biogenesis GTPase RsgA (358 aa).

Residues 76–234 (STEIDRPAVA…LADSPGFNQP (159 aa)) enclose the CP-type G domain. GTP contacts are provided by residues 125–128 (NKID) and 176–184 (GPSGVGKSS). Positions 259, 264, 266, and 272 each coordinate Zn(2+). Positions 319-358 (TYEPKLANKKYRRPSRRGKNQDQERYENKTLQDIYNDDSE) are disordered. Residues 325–336 (ANKKYRRPSRRG) are compositionally biased toward basic residues. The span at 337–348 (KNQDQERYENKT) shows a compositional bias: basic and acidic residues.

The protein belongs to the TRAFAC class YlqF/YawG GTPase family. RsgA subfamily. Monomer. Associates with 30S ribosomal subunit, binds 16S rRNA. The cofactor is Zn(2+).

The protein resides in the cytoplasm. Its function is as follows. One of several proteins that assist in the late maturation steps of the functional core of the 30S ribosomal subunit. Helps release RbfA from mature subunits. May play a role in the assembly of ribosomal proteins into the subunit. Circularly permuted GTPase that catalyzes slow GTP hydrolysis, GTPase activity is stimulated by the 30S ribosomal subunit. The polypeptide is Small ribosomal subunit biogenesis GTPase RsgA (Microcystis aeruginosa (strain NIES-843 / IAM M-2473)).